Reading from the N-terminus, the 433-residue chain is Gamma-glutamyl phosphate reductase (433 aa).

It belongs to the gamma-glutamyl phosphate reductase family.

The protein localises to the cytoplasm. The enzyme catalyses L-glutamate 5-semialdehyde + phosphate + NADP(+) = L-glutamyl 5-phosphate + NADPH + H(+). The protein operates within amino-acid biosynthesis; L-proline biosynthesis; L-glutamate 5-semialdehyde from L-glutamate: step 2/2. Catalyzes the NADPH-dependent reduction of L-glutamate 5-phosphate into L-glutamate 5-semialdehyde and phosphate. The product spontaneously undergoes cyclization to form 1-pyrroline-5-carboxylate. In Cyanothece sp. (strain PCC 7425 / ATCC 29141), this protein is Gamma-glutamyl phosphate reductase.